A 139-amino-acid polypeptide reads, in one-letter code: Maximins 4/H3 type 5 (139 aa).

The signal sequence occupies residues 1–18 (MNFKYIFAVSFLIASAYA). A propeptide spanning residues 19 to 43 (RSVQNDEQSLSQRDVLEEESLREIR) is cleaved from the precursor. Asparagine 70 is modified (asparagine amide). The propeptide occupies 74–118 (TAEEHEVMKRLEAVMRDLDSLDHPEEASERETRGFNQDEIAKEKR). Isoleucine amide is present on isoleucine 138.

The protein belongs to the bombinin family. As to expression, expressed by the skin glands.

The protein resides in the secreted. Maximin-4 shows antibacterial activity against both Gram-positive and Gram-negative bacteria. It also shows antimicrobial activity against the fungus C.albicans, but not against A.flavus nor P.uticale. It has little hemolytic activity. It does not possess a significant cytotoxicity against tumor cell lines. It does not possess a significant anti-HIV activity. In terms of biological role, maximin-H3 shows antibacterial activity against both Gram-positive and Gram-negative bacteria. It also shows antimicrobial activity against the fungus C.albicans. Shows strong hemolytic activity. The polypeptide is Maximins 4/H3 type 5 (Bombina maxima (Giant fire-bellied toad)).